The following is a 75-amino-acid chain: Disintegrin CTF-II (75 aa).

One can recognise a Disintegrin domain in the interval 1–75 (ELLEEGEDCY…SDDCPRWNDL (75 aa)). 6 cysteine pairs are disulfide-bonded: C9-C24, C11-C19, C18-C41, C32-C38, C37-C62, and C50-C69. Residues 54–56 (RGD) carry the Cell attachment site motif.

The protein belongs to the venom metalloproteinase (M12B) family. P-II subfamily. P-IIa sub-subfamily. In terms of assembly, monomer (disintegrin). As to expression, expressed by the venom gland.

It is found in the secreted. In terms of biological role, inhibits fibrinogen interaction with platelet receptors, and inhibits aggregation induced by ADP, thrombin, collagen and platelet-activating factor. Acts by binding to the alpha-IIb/beta-3 (ITGA2B/ITGB3) on the platelet surface. The polypeptide is Disintegrin CTF-II (Protobothrops flavoviridis (Habu)).